We begin with the raw amino-acid sequence, 256 residues long: Undecaprenyl-diphosphatase (256 aa).

A run of 7 helical transmembrane segments spans residues 8-28 (VLGIVEGISEFLPISSTGHLI), 41-61 (FVKSFEISIQLGSILAVVVLY), 75-95 (IIAAFIPTGIIGFLLYKLIKG), 96-116 (FLIGNDLVVVVSLILGGIILI), 175-195 (AEFSFLLAIPTMFAATTYDLI), 208-228 (ILIIGFITSFITALIVVKWFL), and 236-256 (LKIFGFYRILIGLVYAAFFLF).

It belongs to the UppP family.

The protein resides in the cell inner membrane. The enzyme catalyses di-trans,octa-cis-undecaprenyl diphosphate + H2O = di-trans,octa-cis-undecaprenyl phosphate + phosphate + H(+). Its function is as follows. Catalyzes the dephosphorylation of undecaprenyl diphosphate (UPP). Confers resistance to bacitracin. This chain is Undecaprenyl-diphosphatase, found in Aquifex aeolicus (strain VF5).